The primary structure comprises 312 residues: Tetraspanin-17 (312 aa).

4 consecutive transmembrane segments (helical) span residues 17–37 (IFSI…LWML), 64–84 (VSLV…CGAV), 89–109 (FLLL…VAMG), and 274–294 (IWIF…GICL).

It belongs to the tetraspanin (TM4SF) family. As to expression, expressed in dopaminergic neurons, head muscles, vulva and spermatheca.

It localises to the cell membrane. The protein resides in the cell projection. It is found in the dendrite. The protein localises to the axon. Its function is as follows. Protects dopaminergic neurons against oxidative stress-induced neurodegeneration. May act partly via dopamine receptor dop-2 to negatively regulate dopamine reuptake transporter dat-1 activity. Also plays a role in modulating behaviors linked to dopamine signaling. Confers protection against oxidative stress in the whole body. This is Tetraspanin-17 from Caenorhabditis elegans.